The primary structure comprises 328 residues: Ferredoxin--NADP reductase (328 aa).

FAD is bound by residues Glu34, Gln42, Tyr47, Val87, Phe120, Asp283, and Thr323.

This sequence belongs to the ferredoxin--NADP reductase type 2 family. In terms of assembly, homodimer. The cofactor is FAD.

It catalyses the reaction 2 reduced [2Fe-2S]-[ferredoxin] + NADP(+) + H(+) = 2 oxidized [2Fe-2S]-[ferredoxin] + NADPH. The protein is Ferredoxin--NADP reductase of Pediococcus pentosaceus (strain ATCC 25745 / CCUG 21536 / LMG 10740 / 183-1w).